The sequence spans 148 residues: Wound-induced proteinase inhibitor 2 (148 aa).

A signal peptide spans 1–25; it reads MAVHKEVNFVAYLLIVLGMFLYVDA. The 1; trypsin-inhibitory repeat unit spans residues 26-81; the sequence is KACTRECGNLGFGICPRSEGSPLNPICINCCSGYKGCNYYNSFGKFICEGESDPKR. Intrachain disulfides connect C28–C116, C32–C112, C40–C122, C52–C89, C55–C73, C56–C85, C62–C98, and C115–C133. The 2; chymotrypsin-inhibitory repeat unit spans residues 83–141; it reads NACTFNCDPNIAYSRCPRSQGKSLIYPTGCTTCCTGYKGCYYFGKDGKFVCEGESDEPK.

The protein belongs to the protease inhibitor I20 (potato type II proteinase inhibitor) family.

The protein localises to the secreted. In terms of biological role, potent inhibitor of both trypsin and chymotrypsin. This is Wound-induced proteinase inhibitor 2 from Solanum lycopersicum (Tomato).